A 500-amino-acid chain; its full sequence is Flt3-interacting zinc finger protein 1 (500 aa).

Position 1 is an N-acetylmethionine (methionine 1). A disordered region spans residues 1 to 24 (MEDSSLPVVPAPIAAPGPAPSATA). The segment covering 9 to 19 (VPAPIAAPGPA) has biased composition (pro residues). 6 consecutive C2H2-type zinc fingers follow at residues 29 to 51 (FHCS…FARH), 57 to 79 (HACP…LRSH), 85 to 107 (YRCS…QVVH), 113 to 136 (YCCL…KRQH), 204 to 226 (FACG…WAAH), and 232 to 254 (FKCP…KLTH). Disordered stretches follow at residues 255 to 284 (DLQG…ASEV) and 306 to 328 (KLEA…AAAE). The segment covering 256 to 267 (LQGSNAPPTQVW) has biased composition (polar residues). 5 consecutive C2H2-type zinc fingers follow at residues 336 to 357 (YQCD…LEAH), 363 to 386 (YGCG…RASH), 418 to 440 (FGCS…VLVH), 446 to 468 (FPCL…RLLH), and 474 to 496 (FPCH…LKLH). Residues 383–415 (RASHGEGSGEAAPDGEGNQAAGGPGPGSSSRSK) are disordered.

As to quaternary structure, interacts with FLT3 cytoplasmic catalytic domain, following receptor stimulation, in a kinase-independent manner. Does not interact with other structurally related receptor tyrosine kinases, including KIT, CSF1R and PDGFR. Interacts with NRL. In terms of tissue distribution, widely expressed. In the retina, highest expression in the ganglion cell layer.

The protein resides in the cytoplasm. Its subcellular location is the nucleus. In terms of biological role, may be a transcriptional repressor of NRL function in photoreceptors. Does not repress CRX-mediated transactivation. This Mus musculus (Mouse) protein is Flt3-interacting zinc finger protein 1 (Fiz1).